A 73-amino-acid chain; its full sequence is Kappa-scoloptoxin(03)-Ssm1b (73 aa).

The N-terminal stretch at 1 to 23 (MKPSMAILLVIALIIFSLDKSYS) is a signal peptide. Intrachain disulfides connect Cys32/Cys58, Cys41/Cys57, and Cys44/Cys67.

Contains 3 disulfide bonds. Expressed by the venom gland.

It is found in the secreted. Functionally, inhibits voltage-gated potassium channels. This is Kappa-scoloptoxin(03)-Ssm1b from Scolopendra mutilans (Chinese red-headed centipede).